A 386-amino-acid chain; its full sequence is Succinate--CoA ligase [ADP-forming] subunit beta (386 aa).

Positions 9–244 (KELFANYGVP…LDEEEPLEVE (236 aa)) constitute an ATP-grasp domain. Residues lysine 46, 53–55 (GRG), glutamate 99, leucine 102, and glutamate 107 contribute to the ATP site. Residues asparagine 199 and aspartate 213 each contribute to the Mg(2+) site. Substrate contacts are provided by residues asparagine 264 and 321–323 (GIL).

Belongs to the succinate/malate CoA ligase beta subunit family. Heterotetramer of two alpha and two beta subunits. It depends on Mg(2+) as a cofactor.

It carries out the reaction succinate + ATP + CoA = succinyl-CoA + ADP + phosphate. The catalysed reaction is GTP + succinate + CoA = succinyl-CoA + GDP + phosphate. It functions in the pathway carbohydrate metabolism; tricarboxylic acid cycle; succinate from succinyl-CoA (ligase route): step 1/1. Succinyl-CoA synthetase functions in the citric acid cycle (TCA), coupling the hydrolysis of succinyl-CoA to the synthesis of either ATP or GTP and thus represents the only step of substrate-level phosphorylation in the TCA. The beta subunit provides nucleotide specificity of the enzyme and binds the substrate succinate, while the binding sites for coenzyme A and phosphate are found in the alpha subunit. This chain is Succinate--CoA ligase [ADP-forming] subunit beta, found in Desulfatibacillum aliphaticivorans.